The following is a 295-amino-acid chain: Protein PHR1-LIKE 2 (295 aa).

One can recognise an HTH myb-type domain in the interval 38–98 (TDPKPRLRWT…HLQKFRLGRQ (61 aa)). The H-T-H motif DNA-binding region spans 69-94 (PKTIMRTMGVKGLTLYHLKSHLQKFR). The disordered stretch occupies residues 96–138 (GRQAGKESTENSKDASCVGESQDTGSSSTSSMRMAQQEQNEGY). The segment covering 99–108 (AGKESTENSK) has biased composition (basic and acidic residues). A compositionally biased stretch (polar residues) spans 127–138 (MRMAQQEQNEGY). A coiled-coil region spans residues 141 to 161 (TEALRAQMEVQRRLHDQLEVQ). An LHEQLE motif is present at residues 154-159 (LHDQLE).

This sequence belongs to the MYB-CC family. As to quaternary structure, homo- and heterodimers. Interacts with PHL3, but not with PHR1.

Its subcellular location is the nucleus. Its function is as follows. Transcriptional activator. Acts redundantly with PHR1 as a key component of the central regulatory system controlling transcriptional responses to Pi starvation. Binds in a sequence-specific manner to phosphate starvation-regulated promoters. This is Protein PHR1-LIKE 2 from Arabidopsis thaliana (Mouse-ear cress).